Here is a 286-residue protein sequence, read N- to C-terminus: Aquaporin PIP1-1 (286 aa).

The residue at position 1 (M1) is an N-acetylmethionine. The segment at 1–34 is disordered; sequence MEGKEEDVRVGANKFPERQPIGTSAQSDKDYKEP. Residues 1-54 lie on the Cytoplasmic side of the membrane; that stretch reads MEGKEEDVRVGANKFPERQPIGTSAQSDKDYKEPPPAPFFEPGELSSWSFWRAG. A helical transmembrane segment spans residues 55 to 75; sequence IAEFIATFLFLYITVLTVMGV. The Extracellular portion of the chain corresponds to 76 to 91; the sequence is KRSPNMCASVGIQGIA. The chain crosses the membrane as a helical span at residues 92–112; the sequence is WAFGGMIFALVYCTAGISGGH. Topologically, residues 113 to 132 are cytoplasmic; the sequence is INPAVTFGLFLARKLSLTRA. Positions 114–116 match the NPA 1 motif; that stretch reads NPA. The chain crosses the membrane as a helical span at residues 133–153; it reads LYYIVMQCLGAICGAGVVKGF. Topologically, residues 154 to 174 are extracellular; that stretch reads QPKQYQALGGGANTVAHGYTK. Residues 175 to 195 traverse the membrane as a helical segment; it reads GSGLGAEIIGTFVLVYTVFSA. Over 196-208 the chain is Cytoplasmic; it reads TDAKRNARDSHVP. The chain crosses the membrane as a helical span at residues 209 to 229; sequence ILAPLPIGFAVFLVHLATIPI. The Extracellular segment spans residues 230–256; it reads TGTGINPARSLGAAIIYNKDHSWDDHW. The NPA 2 motif lies at 235 to 237; that stretch reads NPA. Residues 257-277 form a helical membrane-spanning segment; sequence VFWVGPFIGAALAALYHVVVI. The Cytoplasmic segment spans residues 278–286; that stretch reads RAIPFKSRS. Residue S284 is modified to Phosphoserine.

It belongs to the MIP/aquaporin (TC 1.A.8) family. PIP (TC 1.A.8.11) subfamily. As to expression, widely expressed. Expressed in roots, above ground and in flower buds.

The protein resides in the cell membrane. In terms of biological role, water channel required to facilitate the transport of water across cell membrane. Its function is impaired by Hg(2+). The protein is Aquaporin PIP1-1 (PIP1-1) of Arabidopsis thaliana (Mouse-ear cress).